The chain runs to 414 residues: Gamma-glutamyl phosphate reductase (414 aa).

Belongs to the gamma-glutamyl phosphate reductase family.

The protein localises to the cytoplasm. It carries out the reaction L-glutamate 5-semialdehyde + phosphate + NADP(+) = L-glutamyl 5-phosphate + NADPH + H(+). Its pathway is amino-acid biosynthesis; L-proline biosynthesis; L-glutamate 5-semialdehyde from L-glutamate: step 2/2. Catalyzes the NADPH-dependent reduction of L-glutamate 5-phosphate into L-glutamate 5-semialdehyde and phosphate. The product spontaneously undergoes cyclization to form 1-pyrroline-5-carboxylate. In Xanthomonas campestris pv. campestris (strain ATCC 33913 / DSM 3586 / NCPPB 528 / LMG 568 / P 25), this protein is Gamma-glutamyl phosphate reductase.